A 443-amino-acid polypeptide reads, in one-letter code: Probable glycine dehydrogenase (decarboxylating) subunit 1 (443 aa).

The protein belongs to the GcvP family. N-terminal subunit subfamily. In terms of assembly, the glycine cleavage system is composed of four proteins: P, T, L and H. In this organism, the P 'protein' is a heterodimer of two subunits.

The catalysed reaction is N(6)-[(R)-lipoyl]-L-lysyl-[glycine-cleavage complex H protein] + glycine + H(+) = N(6)-[(R)-S(8)-aminomethyldihydrolipoyl]-L-lysyl-[glycine-cleavage complex H protein] + CO2. Functionally, the glycine cleavage system catalyzes the degradation of glycine. The P protein binds the alpha-amino group of glycine through its pyridoxal phosphate cofactor; CO(2) is released and the remaining methylamine moiety is then transferred to the lipoamide cofactor of the H protein. The sequence is that of Probable glycine dehydrogenase (decarboxylating) subunit 1 from Oleidesulfovibrio alaskensis (strain ATCC BAA-1058 / DSM 17464 / G20) (Desulfovibrio alaskensis).